Consider the following 351-residue polypeptide: Phosphoribosylformylglycinamidine cyclo-ligase (351 aa).

This sequence belongs to the AIR synthase family.

The protein localises to the cytoplasm. The enzyme catalyses 2-formamido-N(1)-(5-O-phospho-beta-D-ribosyl)acetamidine + ATP = 5-amino-1-(5-phospho-beta-D-ribosyl)imidazole + ADP + phosphate + H(+). It participates in purine metabolism; IMP biosynthesis via de novo pathway; 5-amino-1-(5-phospho-D-ribosyl)imidazole from N(2)-formyl-N(1)-(5-phospho-D-ribosyl)glycinamide: step 2/2. The polypeptide is Phosphoribosylformylglycinamidine cyclo-ligase (Burkholderia mallei (strain NCTC 10247)).